The chain runs to 822 residues: MGDLKSGFEEVDGVRLGYLIIKGKQMFALSQVFTDLLKNIPRTTVHKRMDHLKVKKHHCDLEELRKLKAINSIAFHAAKCTLISREDVEALYTSCKTERVLKTKRRRVGRALATKAPPPERAAAASPRPAFWKDKHQLWRGLSGAARPLPISAQSQRPGAAAARPAAHLPQIFSKYPGSHYPEIVRSPCKSSLNYETAQLQGNYVAFHSDPAYFRSLLCSKHPAAAGATCLERFHLVNSFCPPPHHHHHHHHHHHHHHHRAQQPTPSHHPSHHHRPQPHLGSFPESCSSDSESSSYSDHAANDSDFGSSLSSSSNSVSSEEEEEEGEEEEEEEEEEEGGSGASDSSEISSEEEDSSTESDSSSGSSQVSVQSIRFRRTSFCKPPSVQAQANFLYHLASAAAATKPAAFEDAGRLPDLKSSVKAESPEEWSLQSWAPKGTPVYCPASLGSCFPEIRNDRVSEITFPHSEISSTVKRTDLTINCHAEGASSPSPKTNNVFPQQRILREARKCLQATPTTHCAENSTIAARFLNNDSCGTTANSGKDSKIPHCPEFATDLPSLQSDPRVDTATAAAAAAAATKAESLCTGTGDKTLPFLHNIKIKVEDSSANEEYEPELITNKLKWECNDAEGEFYNMTEKKEEDALVPTAKEGFACPEKETPSLNPLAQSQGLSCTLGSPKPEDGEYKFGARVRKNYRTLVLGKRPVLQTPPVKPNLKSARSPRPTGKTETHEGTLDDFTVLNRRKKVASNVASAVKRPFNFMANFPCPPSLIIGKDGDLWPAYSLNTTKDSQPPHKAHPIWKWQLGGSAIPLPPSHKFRKFNS.

The segment covering histidine 245–alanine 261 has biased composition (basic residues). The tract at residues histidine 245 to valine 370 is disordered. A compositionally biased stretch (low complexity) spans proline 278–serine 318. The segment covering serine 319–glycine 338 has biased composition (acidic residues). Lysine 602 is covalently cross-linked (Glycyl lysine isopeptide (Lys-Gly) (interchain with G-Cter in SUMO2)). Disordered stretches follow at residues glutamate 658 to serine 677 and leucine 706 to glycine 732. The segment covering proline 660–leucine 675 has biased composition (polar residues).

It belongs to the DACH/dachshund family.

This is SKI/DACH domain-containing protein 1 (Skida1) from Mus musculus (Mouse).